Consider the following 179-residue polypeptide: MARLKEIYRNEIAPKLKEELKLSNVMEVPRVTKITLNMGLGEAIGDKKVIEHAVADLEKITGQKPVVTFARKSIAGFKVREGWPIGVKVTLRSDKMYEFLDRLLAISLPRVRDFRGLNAKSFDGRGNYSMGVKEQIIFPEIDYDKIDALRGLDITLTTTARSDDEGRALLRAFKFPFRN.

This sequence belongs to the universal ribosomal protein uL5 family. Part of the 50S ribosomal subunit; part of the 5S rRNA/L5/L18/L25 subcomplex. Contacts the 5S rRNA and the P site tRNA. Forms a bridge to the 30S subunit in the 70S ribosome.

This is one of the proteins that bind and probably mediate the attachment of the 5S RNA into the large ribosomal subunit, where it forms part of the central protuberance. In the 70S ribosome it contacts protein S13 of the 30S subunit (bridge B1b), connecting the 2 subunits; this bridge is implicated in subunit movement. Contacts the P site tRNA; the 5S rRNA and some of its associated proteins might help stabilize positioning of ribosome-bound tRNAs. The protein is Large ribosomal subunit protein uL5 of Pseudomonas putida (strain ATCC 700007 / DSM 6899 / JCM 31910 / BCRC 17059 / LMG 24140 / F1).